We begin with the raw amino-acid sequence, 833 residues long: Mannosyl-oligosaccharide glucosidase (833 aa).

At 1-10 (MLISKSKMFK) the chain is on the cytoplasmic side. Residues 11–28 (TFWILTSIVLLASATVDI) traverse the membrane as a helical; Signal-anchor for type II membrane protein segment. Residues 29-833 (SKLQEFEEYQ…ALVVNILGRF (805 aa)) are Lumenal-facing. Asn-42 and Asn-122 together coordinate substrate. N-linked (GlcNAc...) asparagine glycans are attached at residues Asn-42, Asn-122, and Asn-135. Residue Glu-143 coordinates substrate. Asp-601 functions as the Proton donor in the catalytic mechanism. A disulfide bridge links Cys-669 with Cys-685. N-linked (GlcNAc...) asparagine glycosylation occurs at Asn-787. The Proton acceptor role is filled by Glu-804.

The protein belongs to the glycosyl hydrolase 63 family. N-glycosylated.

Its subcellular location is the endoplasmic reticulum membrane. The catalysed reaction is N(4)-(alpha-D-Glc-(1-&gt;2)-alpha-D-Glc-(1-&gt;3)-alpha-D-Glc-(1-&gt;3)-alpha-D-Man-(1-&gt;2)-alpha-D-Man-(1-&gt;2)-alpha-D-Man-(1-&gt;3)-[alpha-D-Man-(1-&gt;2)-alpha-D-Man-(1-&gt;3)-[alpha-D-Man-(1-&gt;2)-alpha-D-Man-(1-&gt;6)]-alpha-D-Man-(1-&gt;6)]-beta-D-Man-(1-&gt;4)-beta-D-GlcNAc-(1-&gt;4)-beta-D-GlcNAc)-L-asparaginyl-[protein] + H2O = N(4)-(alpha-D-Glc-(1-&gt;3)-alpha-D-Glc-(1-&gt;3)-alpha-D-Man-(1-&gt;2)-alpha-D-Man-(1-&gt;2)-alpha-D-Man-(1-&gt;3)-[alpha-D-Man-(1-&gt;2)-alpha-D-Man-(1-&gt;3)-[alpha-D-Man-(1-&gt;2)-alpha-D-Man-(1-&gt;6)]-alpha-D-Man-(1-&gt;6)]-beta-D-Man-(1-&gt;4)-beta-D-GlcNAc-(1-&gt;4)-beta-D-GlcNAc)-L-asparaginyl-[protein] + beta-D-glucose. The protein operates within glycan metabolism; N-glycan degradation. Miglitol is an effective inhibitor at 1 mM. Functionally, cleaves the distal alpha 1,2-linked glucose residue from the Glc(3)Man(9)GlcNAc(2) oligosaccharide precursor highly specifically. Seems to play a role in beta-1,6-glucan synthesis. In Saccharomyces cerevisiae (strain ATCC 204508 / S288c) (Baker's yeast), this protein is Mannosyl-oligosaccharide glucosidase (CWH41).